The following is a 471-amino-acid chain: G2/mitotic-specific cyclin-1 (471 aa).

The protein belongs to the cyclin family. Cyclin AB subfamily.

Functionally, essential for the control of the cell cycle at the G2/M (mitosis) transition. Interacts with the CDC2 protein kinase to form MPF. G2/M cyclins accumulate steadily during G2 and are abruptly destroyed at mitosis. This chain is G2/mitotic-specific cyclin-1 (CLB1), found in Saccharomyces cerevisiae (strain ATCC 204508 / S288c) (Baker's yeast).